The chain runs to 467 residues: D-hydantoinase (467 aa).

His-65, His-67, and Lys-156 together coordinate Zn(2+). Lys-156 is subject to N6-carboxylysine. Tyr-161 contacts substrate. Positions 189 and 245 each coordinate Zn(2+). Ser-294 is a binding site for substrate. Asp-321 is a Zn(2+) binding site. Asn-343 contributes to the substrate binding site.

This sequence belongs to the metallo-dependent hydrolases superfamily. Hydantoinase/dihydropyrimidinase family. In terms of assembly, homotetramer. Requires Zn(2+) as cofactor. Carboxylation allows a single lysine to coordinate two zinc ions.

Catalyzes the stereospecific hydrolysis of the cyclic amide bond of D-hydantoin derivatives. The polypeptide is D-hydantoinase (hyuA) (Streptomyces coelicolor (strain ATCC BAA-471 / A3(2) / M145)).